The sequence spans 311 residues: Ribosomal RNA small subunit methyltransferase H (311 aa).

S-adenosyl-L-methionine contacts are provided by residues 32–34 (AGH), aspartate 52, phenylalanine 79, aspartate 100, and glutamine 107.

Belongs to the methyltransferase superfamily. RsmH family.

It localises to the cytoplasm. It carries out the reaction cytidine(1402) in 16S rRNA + S-adenosyl-L-methionine = N(4)-methylcytidine(1402) in 16S rRNA + S-adenosyl-L-homocysteine + H(+). Functionally, specifically methylates the N4 position of cytidine in position 1402 (C1402) of 16S rRNA. This chain is Ribosomal RNA small subunit methyltransferase H, found in Staphylococcus aureus (strain COL).